Here is a 249-residue protein sequence, read N- to C-terminus: tRNA pseudouridine synthase A (249 aa).

Asp-53 serves as the catalytic Nucleophile. Residue Tyr-111 coordinates substrate.

It belongs to the tRNA pseudouridine synthase TruA family. As to quaternary structure, homodimer.

The catalysed reaction is uridine(38/39/40) in tRNA = pseudouridine(38/39/40) in tRNA. In terms of biological role, formation of pseudouridine at positions 38, 39 and 40 in the anticodon stem and loop of transfer RNAs. This is tRNA pseudouridine synthase A from Streptococcus suis (strain 05ZYH33).